A 451-amino-acid chain; its full sequence is Eukaryotic translation initiation factor 3 subunit E (451 aa).

One can recognise a PCI domain in the interval 256–425 (TDLFFSPAYI…GTVIMNHPPQ (170 aa)).

The protein belongs to the eIF-3 subunit E family. Component of the eukaryotic translation initiation factor 3 (eIF-3) complex.

It localises to the cytoplasm. Functionally, component of the eukaryotic translation initiation factor 3 (eIF-3) complex, which is involved in protein synthesis of a specialized repertoire of mRNAs and, together with other initiation factors, stimulates binding of mRNA and methionyl-tRNAi to the 40S ribosome. The eIF-3 complex specifically targets and initiates translation of a subset of mRNAs involved in cell proliferation. In Aspergillus oryzae (strain ATCC 42149 / RIB 40) (Yellow koji mold), this protein is Eukaryotic translation initiation factor 3 subunit E (int6).